The primary structure comprises 89 residues: MKGLFLVVFLMWFVSQMNTEETEEYVQFNVIEDPYPRLPRRNYSCSTMACPARHICGCMPTPITPETPYRDLDCGCYHEYDMMPVCEGL.

The signal sequence occupies residues 1-22 (MKGLFLVVFLMWFVSQMNTEET).

Belongs to the scoloptoxin-12 family. Contains 3 disulfide bonds. In terms of tissue distribution, expressed by the venom gland.

The protein resides in the secreted. This chain is U-scoloptoxin(12)-Er1a, found in Ethmostigmus rubripes (Giant centipede).